The sequence spans 464 residues: GDNF family receptor alpha-2 (464 aa).

Residues 1–21 form the signal peptide; it reads MILANAFCLFFFLDETLRSLA. 14 disulfides stabilise this stretch: C40–C93, C47–C53, C63–C78, C95–C105, C161–C222, C168–C174, C185–C200, C195–C241, C224–C229, C251–C323, C258–C264, C275–C293, C285–C347, and C325–C335. An N-linked (GlcNAc...) asparagine glycan is attached at N52. N357 carries an N-linked (GlcNAc...) asparagine glycan. The tract at residues 363–392 is disordered; it reads MSPKGPTFSATQAPRVEKTPSLPDDLSDST. The span at 381–392 shows a compositional bias: low complexity; it reads TPSLPDDLSDST. N-linked (GlcNAc...) asparagine glycosylation occurs at N413. The GPI-anchor amidated serine moiety is linked to residue S443. Positions 444-464 are cleaved as a propeptide — removed in mature form; it reads CRARLSTALTALPLLMVTLAQ.

Belongs to the GDNFR family. As to quaternary structure, interacts with NRTN ligand and RET: forms a 2:2:2 ternary complex composed of NRTN ligand, GFRA2 and RET receptor. Also forms a 4:4:4 tetrameric complex composed of 4 copies of NRTN ligand, GFRA2 and RET receptor, which prevents endocytosis of RET. Interacts with SORL1. In terms of tissue distribution, neurons of the superior cervical and dorsal root ganglia, and adult brain and testis. Low level in the substantia nigra, spleen and adrenal gland. Isoform 1, isoform 2 and isoform 3 are all expressed in brain, liver, ileum, spleen, heart and kidney. In brain, isoform 1 is most abundant, isoform 2 slightly less and isoform 3 is lowest. No significant levels of isoform 1, isoform 2 or isoform 3 expression in testis.

Its subcellular location is the cell membrane. Functionally, receptor for neurturin (NRTN), a growth factor that supports the survival of sympathetic neurons. NRTN-binding leads to autophosphorylation and activation of the RET receptor. Also able to mediate GDNF signaling through the RET tyrosine kinase receptor. Participates in NRTN-induced 'Ser-727' phosphorylation of STAT3. The polypeptide is GDNF family receptor alpha-2 (Mus musculus (Mouse)).